A 953-amino-acid polypeptide reads, in one-letter code: Nucleotide-binding oligomerization domain-containing protein 1 (953 aa).

The region spanning 15–105 (ESHPHIQLLK…AYVDLRPWLL (91 aa)) is the CARD domain. In terms of domain architecture, NACHT spans 196–531 (ETIFILGDAG…AFFTAFFLVL (336 aa)). 202 to 209 (GDAGVGKS) is a binding site for ATP. Residues Cys558 and Cys567 are each lipidated (S-palmitoyl cysteine). 9 LRR repeats span residues 632 to 656 (LKSL…IWML), 702 to 725 (FPKR…ELQP), 727 to 750 (FSRL…VLSE), 755 to 778 (YKIV…YVTK), 783 to 806 (CKGL…YLAL), 839 to 862 (HPSL…SLAR), 867 to 891 (NTSL…LAEM), 895 to 918 (NQTL…QLAD), and 923 to 946 (NTGI…VYED). Cys952 carries S-palmitoyl cysteine lipidation.

The protein belongs to the NOD1-NOD2 family. As to quaternary structure, homooligomer: homooligomerizes following ligand-binding, promoting RIPK2 recruitment. Interacts (via CARD domain) with RIPK2 (via CARD domain). Following RIPK2 recruitment, RIPK2 homooligomerizes via its CARD domain and forms long filaments named RIPosomes. Interacts with ARHGEF2. Interacts (via CARD domain) with ubiquitin; inhibiting interaction with RIPK2. Interacts with NLRP10 and recruits it to the cell membrane following invasive bacterial infection. Interacts with IFIH1; this interaction promotes transcription of antiviral genes and inhibition of viral replication. Interacts with IRGM; promoting NOD1 degradation. Interacts with ATG16L1. In terms of processing, palmitoylated. Palmitoylation is required for proper recruitment to the bacterial entry site and hence for proper signaling upon cognate peptidoglycan detection. Post-translationally, ubiquitinated. 'Lys-48'-linked polyubiquitination by RNF34 promotes proteasomal degradation and thereby negatively regulates NOD1 for instance in NF-kappa-B activation. Degraded via selective autophagy following interaction with IRGM. IRGM promotes NOD1-RIPK2 RIPosome recruitment to autophagosome membranes, promoting their SQSTM1/p62-dependent autophagic degradation. As to expression, highly expressed in adult heart, skeletal muscle, pancreas, spleen and ovary. Also detected in placenta, lung, liver, kidney, thymus, testis, small intestine and colon.

Its subcellular location is the cell membrane. It localises to the apical cell membrane. The protein resides in the basolateral cell membrane. The protein localises to the cytoplasm. Functionally, pattern recognition receptor (PRR) that detects bacterial peptidoglycan fragments and other danger signals and thus participates in both innate and adaptive immune responses. Specifically recognizes and binds gamma-D-glutamyl-meso-diaminopimelic acid (iE-DAP), a dipeptide present in peptidoglycan of Gram-negative bacteria. Preferentially binds iE-DAP in tripeptide-containing muropeptides (MurNAc-TriDAP or TriDAP). Ligand binding triggers oligomerization that facilitates the binding and subsequent activation of the proximal adapter receptor-interacting RIPK2. Following recruitment, RIPK2 undergoes 'Met-1'- (linear) and 'Lys-63'-linked polyubiquitination by E3 ubiquitin-protein ligases XIAP, BIRC2, BIRC3 and the LUBAC complex, becoming a scaffolding protein for downstream effectors, triggering activation of the NF-kappa-B and MAP kinases signaling. This in turn leads to the transcriptional activation of hundreds of genes involved in immune response. Also acts as a regulator of antiviral response elicited by dsRNA and the expression of RLR pathway members by targeting IFIH1 and TRAF3 to modulate the formation of IFIH1-MAVS and TRAF3-MAVS complexes leading to increased transcription of type I IFNs. Also acts as a regulator of autophagy via its interaction with ATG16L1, possibly by recruiting ATG16L1 at the site of bacterial entry. Besides recognizing pathogens, also involved in the endoplasmic reticulum stress response: acts by sensing and binding to the cytosolic metabolite sphingosine-1-phosphate generated in response to endoplasmic reticulum stress, initiating an inflammation process that leads to activation of the NF-kappa-B and MAP kinases signaling. In addition, plays a role in insulin trafficking in beta cells in a cell-autonomous manner. Mechanistically, upon recognizing cognate ligands, NOD1 and RIPK2 localize to insulin vesicles where they recruit RAB1A to direct insulin trafficking through the cytoplasm. In contrast to isoform 1, does not efficiently recognize and bind gamma-D-glutamyl-meso-diaminopimelic acid (iE-DAP) ligand. This is Nucleotide-binding oligomerization domain-containing protein 1 from Homo sapiens (Human).